Reading from the N-terminus, the 978-residue chain is Calsyntenin-1 (978 aa).

The signal sequence occupies residues 1 to 26 (MTFHKTFGYGCIVLICFELLFAGVET). Over 27 to 876 (SSENDDEYLT…SFIHKAEGSH (850 aa)) the chain is Extracellular. Cadherin domains are found at residues 37–143 (QKEI…APTF) and 144–249 (LEPS…MPER). Residue Asn53 is glycosylated (N-linked (GlcNAc...) asparagine). Asn304, Asn486, Asn608, and Asn823 each carry an N-linked (GlcNAc...) asparagine glycan. Residues 877–897 (VTMLIILVSVFLAVLLCGVSI) traverse the membrane as a helical segment. The Cytoplasmic portion of the chain corresponds to 898 to 978 (ARLKNNQKYI…EWDNSNIFQQ (81 aa)). Residues 937 to 958 (ADVTSDASSESENSESEDEEAL) are disordered. A compositionally biased stretch (acidic residues) spans 948-957 (ENSESEDEEA).

Belongs to the calsyntenin family.

It is found in the postsynaptic cell membrane. Its function is as follows. Postsynaptic adhesion molecule that binds to presynaptic neurexins to mediate both excitatory and inhibitory synapse formation. Promotes synapse development by acting as a cell adhesion molecule at the postsynaptic membrane, which associates with neurexin-alpha at the presynaptic membrane. The polypeptide is Calsyntenin-1 (Cals) (Drosophila melanogaster (Fruit fly)).